The chain runs to 30 residues: Protamine-YII (30 aa).

The disordered stretch occupies residues 1–30 (PRRRTRRASRPVRRRRPRRVSRRRRARRRR).

As to expression, testis.

It localises to the nucleus. Its subcellular location is the chromosome. In terms of biological role, protamines substitute for histones in the chromatin of sperm during the haploid phase of spermatogenesis. They compact sperm DNA into a highly condensed, stable and inactive complex. The sequence is that of Protamine-YII from Clupea harengus (Atlantic herring).